The sequence spans 353 residues: tRNA N6-adenosine threonylcarbamoyltransferase (353 aa).

Residues histidine 119 and histidine 123 each coordinate Fe cation. Residues 145 to 149 (LVSGG), aspartate 178, glycine 191, and asparagine 285 contribute to the substrate site. Residue aspartate 313 coordinates Fe cation.

Belongs to the KAE1 / TsaD family. Fe(2+) serves as cofactor.

It is found in the cytoplasm. The catalysed reaction is L-threonylcarbamoyladenylate + adenosine(37) in tRNA = N(6)-L-threonylcarbamoyladenosine(37) in tRNA + AMP + H(+). Required for the formation of a threonylcarbamoyl group on adenosine at position 37 (t(6)A37) in tRNAs that read codons beginning with adenine. Is involved in the transfer of the threonylcarbamoyl moiety of threonylcarbamoyl-AMP (TC-AMP) to the N6 group of A37, together with TsaE and TsaB. TsaD likely plays a direct catalytic role in this reaction. In Magnetococcus marinus (strain ATCC BAA-1437 / JCM 17883 / MC-1), this protein is tRNA N6-adenosine threonylcarbamoyltransferase.